The following is a 375-amino-acid chain: 23S rRNA (uracil(747)-C(5))-methyltransferase RlmC (375 aa).

[4Fe-4S] cluster contacts are provided by Cys3, Cys11, Cys14, and Cys87. S-adenosyl-L-methionine-binding residues include Gln212, Phe241, Glu262, and Asn307. Residue Cys334 is the Nucleophile of the active site.

This sequence belongs to the class I-like SAM-binding methyltransferase superfamily. RNA M5U methyltransferase family. RlmC subfamily.

The catalysed reaction is uridine(747) in 23S rRNA + S-adenosyl-L-methionine = 5-methyluridine(747) in 23S rRNA + S-adenosyl-L-homocysteine + H(+). Its function is as follows. Catalyzes the formation of 5-methyl-uridine at position 747 (m5U747) in 23S rRNA. This is 23S rRNA (uracil(747)-C(5))-methyltransferase RlmC from Salmonella arizonae (strain ATCC BAA-731 / CDC346-86 / RSK2980).